The chain runs to 637 residues: Protein arginine N-methyltransferase 5 (637 aa).

An N-acetylalanine modification is found at alanine 2. Residues arginine 13–proline 292 form a TIM barrel region. An SAM-dependent MTase PRMT-type domain is found at leucine 308 to tryptophan 615. Tyrosine 324 is an S-adenosyl-L-methionine binding site. A protein is bound at residue phenylalanine 327. S-adenosyl-L-methionine contacts are provided by residues lysine 333–tyrosine 334, glutamate 392, and aspartate 419–methionine 420. Glutamate 435 and glutamate 444 together coordinate a protein. Active-site proton donor/acceptor residues include glutamate 435 and glutamate 444. Positions proline 465 to leucine 637 are beta barrel. The tract at residues arginine 488–proline 494 is dimerization.

The protein belongs to the class I-like SAM-binding methyltransferase superfamily. Protein arginine N-methyltransferase family. In terms of assembly, forms, at least, homodimers and homotetramers. Component of the methylosome complex, composed of PRMT5, WDR77 and CLNS1A. Found in a complex composed of PRMT5, WDR77 and RIOK1. RIOK1 and CLNS1A associate with PRMT5 in a mutually exclusive fashion, which allows the recruitment of distinct methylation substrates, such as nucleolin/NCL and Sm proteins, respectively. Interacts with PRDM1. Identified in a complex composed of methylosome and PRMT1 and ERH. Interacts with EGFR; methylates EGFR and stimulates EGFR-mediated ERK activation. Interacts with HOXA9. Interacts with SRGAP2. Found in a complex with COPRS, RUNX1 and CBFB. Interacts with CHTOP; the interaction symmetrically methylates CHTOP, but seems to require the presence of PRMT1. Interacts with EPB41L3; this modulates methylation of target proteins. Component of a high molecular weight E2F-pocket protein complex, CERC (cyclin E1 repressor complex). Associates with SWI/SNF remodeling complexes containing SMARCA2 and SMARCA4. Interacts with JAK2, SSTR1, SUPT5H, BRAF and with active RAF1. Interacts with LSM11, PRMT7 and SNRPD3. Interacts with COPRS; promoting its recruitment on histone H4. Interacts with CLNS1A/pICln. Identified in a complex with CLNS1A/pICln and Sm proteins. Interacts with RPS10. Interacts with WDR77. Interacts with IWS1. Interacts with CRY1. Interacts with POLR2A. Interacts with SMN1/SMN2. Interacts with LYAR; this interaction is direct. Interacts with TTC5/STRAP; this interaction is DNA damage-dependent and promotes PRMT5 interaction with p53/TP53. Interacts with p53/TP53 in response to DNA damage; the interaction is TTC5/STRAP dependent. Interacts with FAM47E; the interaction is direct, promotes PRMT5 localization to chromatin, and does not disrupt its association with WDR77 or STUB1. Interacts with TDRD6. Interacts with STUB1. Interacts with MBD2. Does not interact with MBD3.

The protein resides in the cytoplasm. It localises to the nucleus. It is found in the golgi apparatus. The enzyme catalyses L-arginyl-[protein] + 2 S-adenosyl-L-methionine = N(omega),N(omega)'-dimethyl-L-arginyl-[protein] + 2 S-adenosyl-L-homocysteine + 2 H(+). Its activity is regulated as follows. Activity is increased by EGF, HGF, FGF1 or FGF2 treatments, and slightly decreased by NGF treatment. In terms of biological role, arginine methyltransferase that can both catalyze the formation of omega-N monomethylarginine (MMA) and symmetrical dimethylarginine (sDMA), with a preference for the formation of MMA. Specifically mediates the symmetrical dimethylation of arginine residues in the small nuclear ribonucleoproteins Sm D1 (SNRPD1) and Sm D3 (SNRPD3); such methylation being required for the assembly and biogenesis of snRNP core particles. Methylates SUPT5H and may regulate its transcriptional elongation properties. May methylate the N-terminal region of MBD2. Mono- and dimethylates arginine residues of myelin basic protein (MBP) in vitro. May play a role in cytokine-activated transduction pathways. Negatively regulates cyclin E1 promoter activity and cellular proliferation. Methylates histone H2A and H4 'Arg-3' during germ cell development. Methylates histone H3 'Arg-8', which may repress transcription. Methylates the Piwi proteins (PIWIL1, PIWIL2 and PIWIL4), methylation of Piwi proteins being required for the interaction with Tudor domain-containing proteins and subsequent localization to the meiotic nuage. Methylates RPS10. Attenuates EGF signaling through the MAPK1/MAPK3 pathway acting at 2 levels. First, monomethylates EGFR; this enhances EGFR 'Tyr-1197' phosphorylation and PTPN6 recruitment, eventually leading to reduced SOS1 phosphorylation. Second, methylates RAF1 and probably BRAF, hence destabilizing these 2 signaling proteins and reducing their catalytic activity. Required for induction of E-selectin and VCAM-1, on the endothelial cells surface at sites of inflammation. Methylates HOXA9. Methylates and regulates SRGAP2 which is involved in cell migration and differentiation. Acts as a transcriptional corepressor in CRY1-mediated repression of the core circadian component PER1 by regulating the H4R3 dimethylation at the PER1 promoter. Methylates GM130/GOLGA2, regulating Golgi ribbon formation. Methylates H4R3 in genes involved in glioblastomagenesis in a CHTOP- and/or TET1-dependent manner. Symmetrically methylates POLR2A, a modification that allows the recruitment to POLR2A of proteins including SMN1/SMN2 and SETX. This is required for resolving RNA-DNA hybrids created by RNA polymerase II, that form R-loop in transcription terminal regions, an important step in proper transcription termination. Along with LYAR, binds the promoter of gamma-globin HBG1/HBG2 and represses its expression. Symmetrically methylates NCL. Methylates p53/TP53; methylation might possibly affect p53/TP53 target gene specificity. Involved in spliceosome maturation and mRNA splicing in prophase I spermatocytes through the catalysis of the symmetrical arginine dimethylation of SNRPB (small nuclear ribonucleoprotein-associated protein) and the interaction with tudor domain-containing protein TDRD6. The chain is Protein arginine N-methyltransferase 5 (PRMT5) from Bos taurus (Bovine).